The following is a 403-amino-acid chain: MNDACLLFPASKELDSQNVAVILADDMKHSESILQLGSGAPRKGFPLTSSPLLPMVTPWPFSQDHAAPTLYSLLVAYYKSFQSQKLDPPKWLWQCLGDPSGRKCMVTQFLLPPLGQVRISCYRNLTSIVICQAVDPWENNNEADWRKNPMARPRIKCDHALCFKVVYEGTLWRPHDQKCWLIRLTEGHKYGMEELSPGDWKILQESRPYPYGPIGEDPNLQYAVGVKMKVIGGPLTSTVLALKALSFHRVNICNMDNPSLGEGHAPLRYSHALKAYGPQYGSCEERVWQTATKCIGPEEENYWCEYDHRGFFPMVPNKLSPTWVRHAAPYCIQRFATPYDLQYFANELLPPGFSITTPKGVSYTSDRRLHYGNEGTLQEYNENCDKVKRGYDEISSSDYSDEN.

The protein belongs to the spumavirus protein Bel-2 family.

This chain is Protein Bel-2 (bel2), found in Homo sapiens (Human).